Here is a 494-residue protein sequence, read N- to C-terminus: Ell-associated factor Eaf (494 aa).

Residues 119–138 (KTRSEVTNKPSLMSATNAPM) show a composition bias toward polar residues. Disordered regions lie at residues 119–212 (KTRS…PAWH) and 243–494 (QANI…DDDD). A compositionally biased stretch (low complexity) spans 139 to 156 (SNGAPVPSSAAAGTGSAG). Positions 159 to 178 (ENSTMRISSKTKVSTGSRRN) are enriched in polar residues. S188 is subject to Phosphoserine. 2 stretches are compositionally biased toward polar residues: residues 243 to 256 (QANI…SSAG) and 280 to 306 (QQLT…NNYA). Residues 307 to 319 (QQQQQQQQQQLQQ) show a composition bias toward low complexity. Over residues 320–332 (RASFSHSNHSNSM) the composition is skewed to polar residues. The span at 344–373 (QTAQSMAQAAAALEQQIGGELSASSSSSES) shows a compositional bias: low complexity. The segment covering 374-389 (DSSDSDSGSDSDDSTE) has biased composition (acidic residues). The span at 414–424 (HQQQQHMHQLP) shows a compositional bias: low complexity. Basic residues predominate over residues 437–454 (SHHHHQQQQQSHHHHHHQ). 2 stretches are compositionally biased toward low complexity: residues 455 to 464 (QQQQQQHQQS) and 475 to 488 (NDLL…SSNS).

Belongs to the EAF family.

The protein localises to the nucleus. Its function is as follows. Promotes transcriptional elongation by Su(Tpl)/ELL. Essential for development. The chain is Ell-associated factor Eaf from Drosophila virilis (Fruit fly).